Consider the following 883-residue polypeptide: Phosphoenolpyruvate carboxylase (883 aa).

Catalysis depends on residues His-138 and Lys-546.

The protein belongs to the PEPCase type 1 family. Requires Mg(2+) as cofactor.

It carries out the reaction oxaloacetate + phosphate = phosphoenolpyruvate + hydrogencarbonate. Forms oxaloacetate, a four-carbon dicarboxylic acid source for the tricarboxylic acid cycle. The chain is Phosphoenolpyruvate carboxylase from Escherichia coli O7:K1 (strain IAI39 / ExPEC).